We begin with the raw amino-acid sequence, 638 residues long: Threonine--tRNA ligase (638 aa).

In terms of domain architecture, TGS spans 1 to 61 (MPVVTLPDGS…EADAEVALVT (61 aa)). Residues 242 to 533 (DHRKLGKALD…LTEHYAGQYP (292 aa)) are catalytic. Zn(2+) contacts are provided by Cys333, His384, and His510.

The protein belongs to the class-II aminoacyl-tRNA synthetase family. In terms of assembly, homodimer. It depends on Zn(2+) as a cofactor.

It is found in the cytoplasm. It carries out the reaction tRNA(Thr) + L-threonine + ATP = L-threonyl-tRNA(Thr) + AMP + diphosphate + H(+). Functionally, catalyzes the attachment of threonine to tRNA(Thr) in a two-step reaction: L-threonine is first activated by ATP to form Thr-AMP and then transferred to the acceptor end of tRNA(Thr). Also edits incorrectly charged L-seryl-tRNA(Thr). In Methylococcus capsulatus (strain ATCC 33009 / NCIMB 11132 / Bath), this protein is Threonine--tRNA ligase.